The sequence spans 185 residues: Protein-arginine kinase activator protein (185 aa).

2 positions are modified to phosphoarginine: R115 and R169. The UVR domain occupies R139–S174.

In terms of assembly, interacts with McsB. Phosphorylated on Arg residues by McsB.

Its function is as follows. Activates the phosphorylation activity of the protein-arginine kinase McsB. Is required for the delocalization of competence proteins from the cell poles. The sequence is that of Protein-arginine kinase activator protein (mcsA) from Bacillus subtilis (strain 168).